We begin with the raw amino-acid sequence, 488 residues long: Transmembrane protein 39A-B (488 aa).

2 N-linked (GlcNAc...) asparagine glycosylation sites follow: Asn31 and Asn39. Transmembrane regions (helical) follow at residues Gly72–Ile92, Thr110–Ala130, and Leu155–Val175. N-linked (GlcNAc...) asparagine glycosylation occurs at Asn180. The helical transmembrane segment at Ser182–Phe202 threads the bilayer. An N-linked (GlcNAc...) asparagine glycan is attached at Asn206. The next 4 helical transmembrane spans lie at Glu287–Val307, Cys319–Pro339, Leu420–Leu440, and Asn446–Leu466.

The protein belongs to the TMEM39 family.

It localises to the membrane. The sequence is that of Transmembrane protein 39A-B (tmem39a-b) from Xenopus laevis (African clawed frog).